Reading from the N-terminus, the 680-residue chain is MKMKKFQIPVSFQDLTVNFTQEEWQQLDPAQRLLYRDVMLENYSNLVSVGYHVSKPDVIFKLEQGEEPWIVEEFSNQNYPDIDDALEKNKEIQDKHLTQTVFFSNKTLITERENVFGKTLNLGMNSVPSRKMPYKCNPGGNSLKTNSEVIVAKKSKENRKIPDGYSGFGKHEKSHLGMKKYRYNPMRKASNQNENLILHQNIQILKQPFDYNKCGKTFFKRAILITQKGRQTERKPNECNECRKTFSKRSTLIVHQRIHTGEKPYVCSDCRKTFRVKTSLTRHRRIHTGERPYECSECRKTFIDKSALIVHQKIHGGEKSYECNECGKTFFRKSALAEHFRSHTGEKPYECKECGNAFSKKSYLVVHQRTHRGEKPNECKECGKTFFCQSALTAHQRIHTGEKPYECSECEKTFFCQSALNVHRRSHTGEKPYECSQCGKFLCTKSALIAHQITHRGKKSYECNECGKFFCHKSTLTIHQRTHTGEKHGVFNKCGRISIVKSNCSQCKRMNTKENLYECSEHGHAVSKNSHLIVHQRTIWERPYECNECGRTYCRKSALTHHQRTHTGQRPYECNECGKTFCQKFSFVEHQRTHTGEKPYECNECGKSFCHKSAFRVHRRIHTGEKPYECNQCGKTYRRLWTLTEHQKIHTGEKPYECNKCEKTFRHKSNFLLHQKSHKE.

Positions 10 to 81 constitute a KRAB domain; sequence VSFQDLTVNF…EEFSNQNYPD (72 aa). C2H2-type zinc fingers lie at residues 237–259, 265–287, 293–315, 321–343, 349–371, 377–399, 405–427, 433–455, 461–483, 544–566, 572–594, 600–622, 628–650, and 656–678; these read NECN…QRIH, YVCS…RRIH, YECS…QKIH, YECN…FRSH, YECK…QRTH, NECK…QRIH, YECS…RRSH, YECS…QITH, YECN…QRTH, YECN…RRIH, YECN…QKIH, and YECN…QKSH.

Belongs to the krueppel C2H2-type zinc-finger protein family.

The protein localises to the nucleus. Its function is as follows. May be involved in transcriptional regulation. This is Zinc finger protein 334 (ZNF334) from Homo sapiens (Human).